A 1054-amino-acid polypeptide reads, in one-letter code: Filament-like plant protein 6 (1054 aa).

Coiled-coil stretches lie at residues 64–139 (VQIK…VKQH), 174–200 (AEDR…KDHE), and 250–341 (SNML…RKKL). 2 disordered regions span residues 359-390 (RDSG…GSEF) and 448-506 (EAQL…KEKD). 3 stretches are compositionally biased toward low complexity: residues 371–380 (VKVSSPCKSP), 450–461 (QLQQNNSQKSSL), and 470–494 (SNPS…GSLS). The stretch at 389-463 (EFSLDNAQKF…NNSQKSSLEV (75 aa)) forms a coiled coil. 2 coiled-coil regions span residues 637–666 (QNLV…RIHD) and 788–944 (ESDS…IFVL). A disordered region spans residues 951-1054 (FRPQPEQMRS…SRFFSSKSGY (104 aa)). Positions 1007–1032 (PSDSETSDTTTSPSRVGSRLSRSGSS) are enriched in low complexity.

It belongs to the FPP family. In terms of assembly, interacts with WPP/MAF proteins.

The sequence is that of Filament-like plant protein 6 (FPP6) from Arabidopsis thaliana (Mouse-ear cress).